A 390-amino-acid chain; its full sequence is MRYITAGESHGPQLTVILEGVPAGLTLAAEHINKELLRRQKGHGRGRRMQIEMDTVEIVSGVRHGMTLGSPITLIVKNDDFKHWTKVMGAEPISEKESKEMKRTITKPRPGHADLNGAIKYGHRDIRNVLERSSARETTVRVAAGAVAKQILKELGVEIAGHVLEIGGVKAKHISNLSIEEIQIITENSPVRCLDKTVEQEMMDAIDNAKSSGDSIGGIVEVIAEGMPIGVGSYVHYDRKLDAKLAGAIMSINAFKGAEIGVGFEAARQPGSKVHDEILWDEEQGYTRKTNNAGGLEGGMTTGMPIVVRGVMKPIPTLYKPLASVDIDTKEAFQASIERSDSCAVPAAGVVAESVVAWELAHALVEQFGKDRMELIQQNITQHNKYAKEF.

Arginine 39 and arginine 45 together coordinate NADP(+). Residues 132–134, 253–254, glycine 298, 313–317, and arginine 339 contribute to the FMN site; these read RSS, NA, and KPIPT.

This sequence belongs to the chorismate synthase family. Homotetramer. FMNH2 is required as a cofactor.

It carries out the reaction 5-O-(1-carboxyvinyl)-3-phosphoshikimate = chorismate + phosphate. It functions in the pathway metabolic intermediate biosynthesis; chorismate biosynthesis; chorismate from D-erythrose 4-phosphate and phosphoenolpyruvate: step 7/7. Functionally, catalyzes the anti-1,4-elimination of the C-3 phosphate and the C-6 proR hydrogen from 5-enolpyruvylshikimate-3-phosphate (EPSP) to yield chorismate, which is the branch point compound that serves as the starting substrate for the three terminal pathways of aromatic amino acid biosynthesis. This reaction introduces a second double bond into the aromatic ring system. In Bacillus anthracis, this protein is Chorismate synthase 1.